We begin with the raw amino-acid sequence, 836 residues long: Periostin (836 aa).

Residues M1 to A21 form the signal peptide. The 55-residue stretch at G40 to A94 folds into the EMI domain. Cystine bridges form between C44/C80, C69/C333, C79/C92, C208/C311, and C467/C472. C60 is subject to S-cysteinyl cysteine. FAS1 domains lie at P97–L230, G234–L365, D368–I492, and E496–L628. The N-linked (GlcNAc...) asparagine glycan is linked to N599.

Homodimer. Interacts with BMP1 and fibronectin. Post-translationally, gamma-carboxylation is controversial. Gamma-carboxyglutamated; gamma-carboxyglutamate residues are formed by vitamin K dependent carboxylation; this may be required for calcium binding. According to a more recent report, does not contain vitamin K-dependent gamma-carboxyglutamate residues. As to expression, widely expressed with highest levels in aorta, stomach, lower gastrointestinal tract, placenta, uterus, thyroid tissue and breast. Expressed in the kidney. Expressed in the lung. Up-regulated in epithelial ovarian tumors. Not expressed in normal ovaries. Also highly expressed at the tumor periphery of lung carcinoma tissue but not within the tumor. Overexpressed in breast cancers.

The protein localises to the golgi apparatus. The protein resides in the secreted. Its subcellular location is the extracellular space. It localises to the extracellular matrix. Induces cell attachment and spreading and plays a role in cell adhesion. Enhances incorporation of BMP1 in the fibronectin matrix of connective tissues, and subsequent proteolytic activation of lysyl oxidase LOX. This chain is Periostin (POSTN), found in Homo sapiens (Human).